An 81-amino-acid polypeptide reads, in one-letter code: Apolipoprotein C-I, acidic form (81 aa).

An N-terminal signal peptide occupies residues methionine 1–glycine 24.

This sequence belongs to the apolipoprotein C1 family.

It is found in the secreted. The protein is Apolipoprotein C-I, acidic form (APOC1A) of Theropithecus gelada (Gelada baboon).